A 421-amino-acid chain; its full sequence is Leucine-rich repeat-containing protein 42 (421 aa).

5 LRR repeats span residues V149–K170, E174–L195, S202–T222, N234–F255, and K259–L280. Residues P376 to K406 form a disordered region. Over residues E396–K406 the composition is skewed to low complexity. At S399 the chain carries Phosphoserine.

The protein belongs to the LRRC42 family.

The protein is Leucine-rich repeat-containing protein 42 (Lrrc42) of Mus musculus (Mouse).